A 695-amino-acid chain; its full sequence is N-terminal acetyltransferase A complex subunit-like protein C418.02 (695 aa).

TPR repeat units lie at residues 8–41, 43–75, 76–109, 111–143, 145–177, 217–250, 262–296, 365–398, 399–432, and 477–510; these read EAFL…KPKH, DSVA…DPKS, QFCW…SPNN, SLWY…DSSN, EYRL…CNLS, FNFE…FPNR, WNFY…GISV, LWCT…TPTY, PELF…DKSD, and VWFL…YKKW.

Component of the N-terminal acetyltransferase A (NatA) complex.

Its subcellular location is the cytoplasm. It localises to the nucleus. In terms of biological role, non-catalytic component of the NatA N-terminal acetyltransferase, which catalyzes acetylation of proteins beginning with Met-Ser, Met-Gly and Met-Ala. N-acetylation plays a role in normal eukaryotic translation and processing, protect against proteolytic degradation and protein turnover. This Schizosaccharomyces pombe (strain 972 / ATCC 24843) (Fission yeast) protein is N-terminal acetyltransferase A complex subunit-like protein C418.02.